The sequence spans 266 residues: Energy-coupling factor transporter transmembrane protein EcfT (266 aa).

Helical transmembrane passes span isoleucine 32–valine 52, proline 71–glycine 91, leucine 107–leucine 127, valine 152–methionine 172, and aspartate 246–tryptophan 266.

Belongs to the energy-coupling factor EcfT family. In terms of assembly, forms a stable energy-coupling factor (ECF) transporter complex composed of 2 membrane-embedded substrate-binding proteins (S component), 2 ATP-binding proteins (A component) and 2 transmembrane proteins (T component). May be able to interact with more than 1 S component at a time.

Its subcellular location is the cell membrane. Its function is as follows. Transmembrane (T) component of an energy-coupling factor (ECF) ABC-transporter complex. Unlike classic ABC transporters this ECF transporter provides the energy necessary to transport a number of different substrates. The polypeptide is Energy-coupling factor transporter transmembrane protein EcfT (Levilactobacillus brevis (strain ATCC 367 / BCRC 12310 / CIP 105137 / JCM 1170 / LMG 11437 / NCIMB 947 / NCTC 947) (Lactobacillus brevis)).